Consider the following 208-residue polypeptide: MAKEIPDLVAEARAGTGKGAARQARREGKVPGIVYGDGKEPQPIQIEFNSLLTKLRAGRFMSTLWNLKVEGQDDVRVVCRGVQRDVVKDLPTHIDFMRLHRNTRVNLFIHVNFENQDEAPGLKRGGTLVVVRPEVELVVTASDIPEQITVDLTGKQIGDTIHINDVVLPKGVKPTIDRNFVIANIAAPSGLRSADNEEAAAESEATEA.

Belongs to the bacterial ribosomal protein bL25 family. CTC subfamily. As to quaternary structure, part of the 50S ribosomal subunit; part of the 5S rRNA/L5/L18/L25 subcomplex. Contacts the 5S rRNA. Binds to the 5S rRNA independently of L5 and L18.

In terms of biological role, this is one of the proteins that binds to the 5S RNA in the ribosome where it forms part of the central protuberance. In Paracoccus denitrificans (strain Pd 1222), this protein is Large ribosomal subunit protein bL25.